Reading from the N-terminus, the 283-residue chain is Thymidylate synthase (283 aa).

Residue R22 coordinates dUMP. Residue C160 is the Nucleophile of the active site. DUMP is bound by residues 180-183, N191, and 221-223; these read RSCD and HIY. D183 is a (6R)-5,10-methylene-5,6,7,8-tetrahydrofolate binding site. S282 is a (6R)-5,10-methylene-5,6,7,8-tetrahydrofolate binding site.

The protein belongs to the thymidylate synthase family. Bacterial-type ThyA subfamily. Homodimer.

Its subcellular location is the cytoplasm. It carries out the reaction dUMP + (6R)-5,10-methylene-5,6,7,8-tetrahydrofolate = 7,8-dihydrofolate + dTMP. The protein operates within pyrimidine metabolism; dTTP biosynthesis. Its function is as follows. Catalyzes the reductive methylation of 2'-deoxyuridine-5'-monophosphate (dUMP) to 2'-deoxythymidine-5'-monophosphate (dTMP) while utilizing 5,10-methylenetetrahydrofolate (mTHF) as the methyl donor and reductant in the reaction, yielding dihydrofolate (DHF) as a by-product. This enzymatic reaction provides an intracellular de novo source of dTMP, an essential precursor for DNA biosynthesis. The protein is Thymidylate synthase of Vibrio cholerae serotype O1 (strain ATCC 39315 / El Tor Inaba N16961).